The sequence spans 341 residues: S-adenosylmethionine:tRNA ribosyltransferase-isomerase (341 aa).

Belongs to the QueA family. As to quaternary structure, monomer.

The protein resides in the cytoplasm. It carries out the reaction 7-aminomethyl-7-carbaguanosine(34) in tRNA + S-adenosyl-L-methionine = epoxyqueuosine(34) in tRNA + adenine + L-methionine + 2 H(+). Its pathway is tRNA modification; tRNA-queuosine biosynthesis. Functionally, transfers and isomerizes the ribose moiety from AdoMet to the 7-aminomethyl group of 7-deazaguanine (preQ1-tRNA) to give epoxyqueuosine (oQ-tRNA). The polypeptide is S-adenosylmethionine:tRNA ribosyltransferase-isomerase (Clostridium botulinum (strain Langeland / NCTC 10281 / Type F)).